Consider the following 242-residue polypeptide: DNA repair protein RecO (242 aa).

It belongs to the RecO family. Monomer.

Its function is as follows. Involved in DNA repair and RecF pathway recombination. This chain is DNA repair protein RecO, found in Salmonella dublin (strain CT_02021853).